Consider the following 300-residue polypeptide: Bifunctional protein FolD (300 aa).

NADP(+) contacts are provided by residues 169–171 (GRG), Ser196, and Ile237.

The protein belongs to the tetrahydrofolate dehydrogenase/cyclohydrolase family. In terms of assembly, homodimer.

The catalysed reaction is (6R)-5,10-methylene-5,6,7,8-tetrahydrofolate + NADP(+) = (6R)-5,10-methenyltetrahydrofolate + NADPH. It catalyses the reaction (6R)-5,10-methenyltetrahydrofolate + H2O = (6R)-10-formyltetrahydrofolate + H(+). It participates in one-carbon metabolism; tetrahydrofolate interconversion. Functionally, catalyzes the oxidation of 5,10-methylenetetrahydrofolate to 5,10-methenyltetrahydrofolate and then the hydrolysis of 5,10-methenyltetrahydrofolate to 10-formyltetrahydrofolate. The protein is Bifunctional protein FolD of Clavibacter sepedonicus (Clavibacter michiganensis subsp. sepedonicus).